Reading from the N-terminus, the 113-residue chain is U11-theraphotoxin-Hhn1s (113 aa).

A signal peptide spans 1–21 (MNTVRVTFLLVFVLAVSLGQA). The propeptide occupies 22–74 (DKDENRMEMQEKTEQGKSYLDFAENLLLQKLEELEAKLLEEDSEESRNSRQKR). Positions 61-83 (EEDSEESRNSRQKRCIGEGVPCD) are disordered. Disulfide bonds link Cys75/Cys90, Cys82/Cys95, and Cys89/Cys110.

The protein belongs to the neurotoxin 14 (magi-1) family. 01 (HNTX-16) subfamily. Expressed by the venom gland.

It localises to the secreted. In terms of biological role, probable ion channel inhibitor. In Cyriopagopus hainanus (Chinese bird spider), this protein is U11-theraphotoxin-Hhn1s.